The sequence spans 365 residues: Fructose-1,6-bisphosphate aldolase/phosphatase (365 aa).

The active-site Proton acceptor; for FBP phosphatase activity is Asp-11. Asp-11, His-18, Asp-52, and Asp-53 together coordinate Mg(2+). His-18 is a binding site for beta-D-fructose 1,6-bisphosphate. Residue His-18 participates in dihydroxyacetone phosphate binding. Beta-D-fructose 1,6-bisphosphate is bound at residue Tyr-90. Gln-94 lines the Mg(2+) pocket. Position 103–104 (103–104 (GN)) interacts with beta-D-fructose 1,6-bisphosphate. Asp-131 contributes to the Mg(2+) binding site. A beta-D-fructose 1,6-bisphosphate-binding site is contributed by Lys-132. Residue Lys-132 coordinates dihydroxyacetone phosphate. Tyr-228 functions as the Proton donor/acceptor; for FBP aldolase activity in the catalytic mechanism. Lys-231, Asp-232, and Asp-233 together coordinate Mg(2+). Lys-231 serves as the catalytic Schiff-base intermediate with DHAP; for FBP aldolase activity. Beta-D-fructose 1,6-bisphosphate-binding positions include 241 to 242 (QS), Arg-265, Asp-286, and Tyr-347. Residues Arg-265 and Asp-286 each contribute to the dihydroxyacetone phosphate site.

Belongs to the FBP aldolase/phosphatase family. Homooctamer; dimer of tetramers. Mg(2+) is required as a cofactor.

The catalysed reaction is beta-D-fructose 1,6-bisphosphate + H2O = beta-D-fructose 6-phosphate + phosphate. The enzyme catalyses beta-D-fructose 1,6-bisphosphate = D-glyceraldehyde 3-phosphate + dihydroxyacetone phosphate. The protein operates within carbohydrate biosynthesis; gluconeogenesis. Catalyzes two subsequent steps in gluconeogenesis: the aldol condensation of dihydroxyacetone phosphate (DHAP) and glyceraldehyde-3-phosphate (GA3P) to fructose-1,6-bisphosphate (FBP), and the dephosphorylation of FBP to fructose-6-phosphate (F6P). This chain is Fructose-1,6-bisphosphate aldolase/phosphatase, found in Methanothermobacter marburgensis (strain ATCC BAA-927 / DSM 2133 / JCM 14651 / NBRC 100331 / OCM 82 / Marburg) (Methanobacterium thermoautotrophicum).